A 960-amino-acid chain; its full sequence is Leucine--tRNA ligase (960 aa).

The 'HIGH' region signature appears at 71–82 (PYPSGAGLHVGH). Positions 729–733 (KMGKS) match the 'KMSKS' region motif. Lys732 provides a ligand contact to ATP.

This sequence belongs to the class-I aminoacyl-tRNA synthetase family.

Its subcellular location is the cytoplasm. The catalysed reaction is tRNA(Leu) + L-leucine + ATP = L-leucyl-tRNA(Leu) + AMP + diphosphate. This Corynebacterium diphtheriae (strain ATCC 700971 / NCTC 13129 / Biotype gravis) protein is Leucine--tRNA ligase.